The following is a 227-amino-acid chain: Dephospho-CoA kinase (227 aa).

Residues 31 to 227 (KIGLTGGIGS…EKLFQFINCL (197 aa)) form the DPCK domain. Position 39-44 (39-44 (GSGKST)) interacts with ATP.

It belongs to the CoaE family.

Its subcellular location is the cytoplasm. The catalysed reaction is 3'-dephospho-CoA + ATP = ADP + CoA + H(+). The protein operates within cofactor biosynthesis; coenzyme A biosynthesis; CoA from (R)-pantothenate: step 5/5. Its function is as follows. Catalyzes the phosphorylation of the 3'-hydroxyl group of dephosphocoenzyme A to form coenzyme A. The chain is Dephospho-CoA kinase from Clostridium tetani (strain Massachusetts / E88).